A 339-amino-acid polypeptide reads, in one-letter code: Probable cytosolic iron-sulfur protein assembly protein CIAO1 (339 aa).

WD repeat units follow at residues 14–53 (HPDS…WICK), 59–98 (GHQR…FECV), 103–142 (GHEN…EYEC), 148–187 (SHTQ…WVCC), 192–231 (GHES…NEQG), 250–289 (FHTR…DPQQ), and 301–339 (AHSQ…PAGL). The short motif at 176-178 (LYQ) is the LYR motif; required for interaction with HSC20 element.

Belongs to the WD repeat CIA1 family. Component of the CIA complex. Interacts with CIAO2A and forms a complex with CIAO2B and MMS19; the interactions with CIAO2A and CIAO2B are mutually exclusive. Interacts with CHD1L, ERCC2, IREB2 and POLD1. Component of the MMXD complex, which includes CIAO1, ERCC2, CIAO2B, MMS19 and SLC25A5. Interacts with WT1. Interacts with CIAO3. Interacts (via LYR motif) with HSC20.

It localises to the cytoplasm. Its function is as follows. Key component of the cytosolic iron-sulfur protein assembly (CIA) complex, a multiprotein complex that mediates the incorporation of iron-sulfur cluster into extramitochondrial Fe/S proteins. As a CIA complex component, interacts specifically with CIAO2A or CIAO2B and MMS19 to assist different branches of iron-sulfur protein assembly, depending of its interactors. The complex CIAO1:CIAO2B:MMS19 binds to and facilitates the assembly of most cytosolic-nuclear Fe/S proteins. CIAO1:CIAO2A specifically matures ACO1 and stabilizes IREB2. Seems to specifically modulate the transactivation activity of WT1. As part of the mitotic spindle-associated MMXD complex it may play a role in chromosome segregation. This chain is Probable cytosolic iron-sulfur protein assembly protein CIAO1, found in Mus musculus (Mouse).